Reading from the N-terminus, the 75-residue chain is Protein SlyX homolog (75 aa).

Residues 56 to 75 (KNMDSSNMEDPANEPPPPHY) form a disordered region.

The protein belongs to the SlyX family.

The chain is Protein SlyX homolog from Vibrio parahaemolyticus serotype O3:K6 (strain RIMD 2210633).